We begin with the raw amino-acid sequence, 225 residues long: Thymidylate kinase (225 aa).

15–22 (GGEGSGKS) contributes to the ATP binding site.

The protein belongs to the thymidylate kinase family.

The catalysed reaction is dTMP + ATP = dTDP + ADP. Functionally, phosphorylation of dTMP to form dTDP in both de novo and salvage pathways of dTTP synthesis. In Protochlamydia amoebophila (strain UWE25), this protein is Thymidylate kinase.